Here is a 198-residue protein sequence, read N- to C-terminus: Holliday junction branch migration complex subunit RuvA (198 aa).

The domain I stretch occupies residues 1-63 (MIALLTGQIA…EDAIQLYGFR (63 aa)). A domain II region spans residues 64-142 (TSLEKSFFQL…KLDLSSVVVP (79 aa)). Positions 143 to 153 (EPRQMPEDDLL) are flexible linker. The segment at 153 to 198 (LEDVVSALLNLGYKEPQVRKVLAGLNPGSDASLEGVLKQALKSLMR) is domain III.

Belongs to the RuvA family. As to quaternary structure, homotetramer. Forms an RuvA(8)-RuvB(12)-Holliday junction (HJ) complex. HJ DNA is sandwiched between 2 RuvA tetramers; dsDNA enters through RuvA and exits via RuvB. An RuvB hexamer assembles on each DNA strand where it exits the tetramer. Each RuvB hexamer is contacted by two RuvA subunits (via domain III) on 2 adjacent RuvB subunits; this complex drives branch migration. In the full resolvosome a probable DNA-RuvA(4)-RuvB(12)-RuvC(2) complex forms which resolves the HJ.

The protein resides in the cytoplasm. Its function is as follows. The RuvA-RuvB-RuvC complex processes Holliday junction (HJ) DNA during genetic recombination and DNA repair, while the RuvA-RuvB complex plays an important role in the rescue of blocked DNA replication forks via replication fork reversal (RFR). RuvA specifically binds to HJ cruciform DNA, conferring on it an open structure. The RuvB hexamer acts as an ATP-dependent pump, pulling dsDNA into and through the RuvAB complex. HJ branch migration allows RuvC to scan DNA until it finds its consensus sequence, where it cleaves and resolves the cruciform DNA. This chain is Holliday junction branch migration complex subunit RuvA, found in Pelobacter propionicus (strain DSM 2379 / NBRC 103807 / OttBd1).